Here is a 265-residue protein sequence, read N- to C-terminus: Pancreas transcription factor 1 subunit alpha (265 aa).

The bHLH domain maps to glutamine 115 to leucine 167.

The protein resides in the nucleus. In terms of biological role, transcription factor implicated in the cell fate determination in various organs. Binds to the E-box consensus sequence 5'-CANNTG-3'. Required for exocrine pancreatic development. Plays a central role in directing the differentiation of retinal progenitors towards horizontal and amacrine fates. The sequence is that of Pancreas transcription factor 1 subunit alpha (ptf1a) from Danio rerio (Zebrafish).